The following is a 61-amino-acid chain: Small ribosomal subunit protein uS14B (61 aa).

Residues Cys24, Cys27, Cys40, and Cys43 each contribute to the Zn(2+) site.

The protein belongs to the universal ribosomal protein uS14 family. Zinc-binding uS14 subfamily. As to quaternary structure, part of the 30S ribosomal subunit. Contacts proteins S3 and S10. The cofactor is Zn(2+).

Binds 16S rRNA, required for the assembly of 30S particles and may also be responsible for determining the conformation of the 16S rRNA at the A site. The protein is Small ribosomal subunit protein uS14B of Mycobacteroides abscessus (strain ATCC 19977 / DSM 44196 / CCUG 20993 / CIP 104536 / JCM 13569 / NCTC 13031 / TMC 1543 / L948) (Mycobacterium abscessus).